Consider the following 281-residue polypeptide: MAELISFVVPTQSDKVLLVWDLSTGPPAEALSHSLFTVFSQFGLLYSVRVFPNAAVARPGFYAIIKFYSSRDAQRAQKACDGKPLFQTSPVKVRLGTRHKALQHQAFALNSSRCQELANYYFGFSGWSKRIIKLQELSGLEDAALAVPMQKGSPQFLCAVEVVLPPYGCRSPGVGISEEPLRQLEEGQSSFLMKRKTAQKLAFQAAVSDAFQKLTIVVLESGRIAVEYRPTAEDLDARSEEELQNLIQVSCSSWSQSSQREEECLSDFSLEEEDLKLCDPH.

The segment at 1–92 (MAELISFVVP…KPLFQTSPVK (92 aa)) is necessary for nuclear localization and for nucleolar accumulation in response to heat shock. Residues 15–98 (KVLLVWDLST…SPVKVRLGTR (84 aa)) enclose the RRM domain. The necessary for nuclear and nucleolar localization stretch occupies residues 90–133 (PVKVRLGTRHKALQHQAFALNSSRCQELANYYFGFSGWSKRIIK).

In terms of assembly, homodimer.

The protein resides in the nucleus. The protein localises to the cytoplasm. It is found in the nucleolus. Its subcellular location is the cajal body. It localises to the PML body. May confer resistance to the antitumor agent cisplatin. Binds to DNA and RNA. The polypeptide is RAD52 motif-containing protein 1 (Rdm1) (Mus musculus (Mouse)).